Consider the following 312-residue polypeptide: Methionyl-tRNA formyltransferase (312 aa).

117 to 120 (SLLP) is a (6S)-5,6,7,8-tetrahydrofolate binding site.

It belongs to the Fmt family.

The catalysed reaction is L-methionyl-tRNA(fMet) + (6R)-10-formyltetrahydrofolate = N-formyl-L-methionyl-tRNA(fMet) + (6S)-5,6,7,8-tetrahydrofolate + H(+). Attaches a formyl group to the free amino group of methionyl-tRNA(fMet). The formyl group appears to play a dual role in the initiator identity of N-formylmethionyl-tRNA by promoting its recognition by IF2 and preventing the misappropriation of this tRNA by the elongation apparatus. The polypeptide is Methionyl-tRNA formyltransferase (Bordetella bronchiseptica (strain ATCC BAA-588 / NCTC 13252 / RB50) (Alcaligenes bronchisepticus)).